Reading from the N-terminus, the 276-residue chain is Shikimate dehydrogenase (NADP(+)) (276 aa).

Shikimate is bound by residues 15-17 and threonine 62; that span reads SKS. The active-site Proton acceptor is the lysine 66. NADP(+) is bound at residue glutamate 78. 2 residues coordinate shikimate: asparagine 87 and aspartate 103. NADP(+) contacts are provided by residues 127-131, 150-155, and methionine 214; these read GAGGV and NRTHIK. Tyrosine 216 is a binding site for shikimate. Glycine 239 provides a ligand contact to NADP(+).

Belongs to the shikimate dehydrogenase family. In terms of assembly, homodimer.

It carries out the reaction shikimate + NADP(+) = 3-dehydroshikimate + NADPH + H(+). Its pathway is metabolic intermediate biosynthesis; chorismate biosynthesis; chorismate from D-erythrose 4-phosphate and phosphoenolpyruvate: step 4/7. In terms of biological role, involved in the biosynthesis of the chorismate, which leads to the biosynthesis of aromatic amino acids. Catalyzes the reversible NADPH linked reduction of 3-dehydroshikimate (DHSA) to yield shikimate (SA). This chain is Shikimate dehydrogenase (NADP(+)), found in Haemophilus ducreyi (strain 35000HP / ATCC 700724).